The primary structure comprises 945 residues: Netrin receptor UNC5B (945 aa).

An N-terminal signal peptide occupies residues 1–26; it reads MRARSGARGALLLALLLCWDPTPSLA. At 27–377 the chain is on the extracellular side; that stretch reads GIDSGGQALP…LEPSGDVALY (351 aa). The region spanning 48–145 is the Ig-like domain; sequence PHFLLEPEDA…SGTTKSRRAY (98 aa). Intrachain disulfides connect Cys69–Cys130, Cys81–Cys128, Cys174–Cys225, Cys258–Cys295, Cys262–Cys299, Cys273–Cys285, Cys314–Cys348, Cys318–Cys353, and Cys326–Cys338. One can recognise an Ig-like C2-type domain in the interval 153-242; it reads KNFDQEPLAK…KRRSTTATVI (90 aa). Asn222 carries N-linked (GlcNAc...) asparagine glycosylation. TSP type-1 domains follow at residues 246-300 and 302-354; these read NGGW…TVCP and DGAW…GLCV. A glycan (N-linked (GlcNAc...) asparagine) is linked at Asn347. Residues 378-398 form a helical membrane-spanning segment; that stretch reads AGLVVAVFVVLAVLMAVGVIV. Residues 399–945 are Cytoplasmic-facing; it reads YRRNCRDFDT…LVAMTTDGDC (547 aa). Cys403 is lipidated: S-palmitoyl cysteine. The ZU5 domain maps to 543–686; the sequence is SSVSGTFGCL…LGTYVFTGES (144 aa). A Phosphotyrosine modification is found at Tyr581. Residues 689–838 are UPA domain; sequence RSAVKRLQLA…AETPAGSLDA (150 aa). The segment at 707-725 is interaction with DCC; sequence SLEYSLRVYCLEDTPAALK. A Death domain is found at 865–943; sequence KICNSLDAPN…EMLVAMTTDG (79 aa).

The protein belongs to the unc-5 family. As to quaternary structure, interacts with the cytoplasmic part of DCC. Interacts with GNAI2 via its cytoplasmic part. Interacts (via death domain) with DAPK1 (via death domain). Interacts (via extracellular domain) with FLRT3 (via extracellular domain); the interaction is direct. Interacts (via extracellular domain) with FLRT2 and FLRT3 (via extracellular domain), but has higher affinity for FLRT3. Identified in a complex with FLRT3 and ADGRL3; does not interact with ADGRL3 by itself. Phosphorylated on cytoplasmic tyrosine residues. In terms of processing, proteolytically cleaved by caspases during apoptosis. The cleavage does not take place when the receptor is associated with netrin ligand. Its cleavage by caspases is required to induce apoptosis. Post-translationally, palmitoylation is required for pro-apoptotic activity, but not for location at lipid rafts. Mainly expressed in regions of differentiating neurons. Expressed in the developing sensory ganglia that flank the spinal cord from E12, peaking at E14. Expressed in the roof plate region of the spinal cord from E14.

It localises to the cell membrane. Its subcellular location is the membrane raft. Its function is as follows. Receptor for netrin required for axon guidance. Mediates axon repulsion of neuronal growth cones in the developing nervous system upon ligand binding. Axon repulsion in growth cones may be caused by its association with DCC that may trigger signaling for repulsion. Functions as a netrin receptor that negatively regulates vascular branching during angiogenesis. Mediates retraction of tip cell filopodia on endothelial growth cones in response to netrin. It also acts as a dependence receptor required for apoptosis induction when not associated with netrin ligand. Mediates apoptosis by activating DAPK1. In the absence of NTN1, activates DAPK1 by reducing its autoinhibitory phosphorylation at Ser-308 thereby increasing its catalytic activity. The protein is Netrin receptor UNC5B (Unc5b) of Rattus norvegicus (Rat).